A 485-amino-acid polypeptide reads, in one-letter code: MSDITSLTLTELVKNIKDKKISSEETTKAFIDRGEKSRDLNTYITEDFSNALLKAKSFDQKPNFDLKLPGVPIAVKDLFCTKDVKTTAGSKILNNFIPPYESTVTQNIWNEGAILLGKLNCDEFAMGSSNETSFFGNVQSPIDKGLVPGGSSGGSASALAANLTPITIGTDTGGSIRQPASFTGTVGLKPTYGSCSRYGIVAFASSLDQAGPMSKDVKDCALLQEIISTYDEKDSTSIDFKRNEYSKELTNNIKGKKIGIPKEYRVDGMPKEIEDLWTKGIEYAKDCGAEIVEISLPHTNYALPTYYIVAPAEASSNLARYDGVKYGFRSKGENLIDMYEKTRSEGFGSEVQRRIMIGTYVLSSGYYDAYYLKAQKVRKLIKNDFDEAYKKVDAILTPSTPSAAFKIGEKTNDPVSMYLNDIFTVPVNLAGLPAISIPAGIDVKGYPLGLQIIGKAFDEQNILNIAYAMEEKIQFKNKITDWWIK.

Residues Lys-76 and Ser-151 each act as charge relay system in the active site. The Acyl-ester intermediate role is filled by Ser-175.

Belongs to the amidase family. GatA subfamily. As to quaternary structure, heterotrimer of A, B and C subunits.

It carries out the reaction L-glutamyl-tRNA(Gln) + L-glutamine + ATP + H2O = L-glutaminyl-tRNA(Gln) + L-glutamate + ADP + phosphate + H(+). In terms of biological role, allows the formation of correctly charged Gln-tRNA(Gln) through the transamidation of misacylated Glu-tRNA(Gln) in organisms which lack glutaminyl-tRNA synthetase. The reaction takes place in the presence of glutamine and ATP through an activated gamma-phospho-Glu-tRNA(Gln). This chain is Glutamyl-tRNA(Gln) amidotransferase subunit A, found in Pelagibacter ubique (strain HTCC1062).